The primary structure comprises 98 residues: MSITYMNMFMAFTISLLGLLMYRSHMMSSLLCLEGMMLSLFVMMTMAILNTHLTLASMIPIILLVFAACEAALGLSLLVMVSTTYGMDYVQNLNLLQC.

A run of 3 helical transmembrane segments spans residues 1–21 (MSIT…GLLM), 29–49 (SLLC…MAIL), and 61–81 (IILL…LVMV).

It belongs to the complex I subunit 4L family. Core subunit of respiratory chain NADH dehydrogenase (Complex I) which is composed of 45 different subunits.

It is found in the mitochondrion inner membrane. The enzyme catalyses a ubiquinone + NADH + 5 H(+)(in) = a ubiquinol + NAD(+) + 4 H(+)(out). Its function is as follows. Core subunit of the mitochondrial membrane respiratory chain NADH dehydrogenase (Complex I) which catalyzes electron transfer from NADH through the respiratory chain, using ubiquinone as an electron acceptor. Part of the enzyme membrane arm which is embedded in the lipid bilayer and involved in proton translocation. The polypeptide is NADH-ubiquinone oxidoreductase chain 4L (MT-ND4L) (Mesophylla macconnelli (MacConnell's bat)).